Consider the following 181-residue polypeptide: Ribosome maturation factor RimP (181 aa).

Belongs to the RimP family.

The protein resides in the cytoplasm. Functionally, required for maturation of 30S ribosomal subunits. This is Ribosome maturation factor RimP from Mycolicibacterium smegmatis (strain ATCC 700084 / mc(2)155) (Mycobacterium smegmatis).